The following is a 41-amino-acid chain: U-theraphotoxin-Lk1a (41 aa).

3 disulfides stabilise this stretch: Cys1/Cys16, Cys8/Cys21, and Cys15/Cys36.

The protein belongs to the neurotoxin 14 (magi-1) family. 08 (Ltx-4) subfamily. In terms of tissue distribution, expressed by the venom gland.

It is found in the secreted. Functionally, toxin that causes irreversible contractile paralysis in adult Aedes aegypti resulting in 100% mortality after 24 hours. The chain is U-theraphotoxin-Lk1a from Lasiodora klugi (Bahia scarlet tarantula).